The following is a 56-amino-acid chain: Ovomucoid (56 aa).

The Kazal-like domain occupies 6–56; the sequence is VDCSEYPKPACTLEYRPLCGSDNKTYANKCNFCNAVVESNGTLTLSHFGKC. Disulfide bonds link cysteine 8/cysteine 38, cysteine 16/cysteine 35, and cysteine 24/cysteine 56. An N-linked (GlcNAc...) asparagine glycan is attached at asparagine 45.

It localises to the secreted. The polypeptide is Ovomucoid (Callipepla californica (California quail)).